Reading from the N-terminus, the 580-residue chain is Transcription factor coe2-B (580 aa).

The interval 60-63 is interaction with DNA; sequence RKSN. The segment at 148-167 adopts a C5-type zinc-finger fold; that stretch reads CRVLLTHEVMCSRCCEKKSC. Interaction with DNA regions lie at residues 194-201 and 233-236; these read NCLKTAGN and NNSK. The region spanning 259–341 is the IPT/TIG domain; that stretch reads PCIKAISPSE…CKGAPGRFIY (83 aa). The interval 455–492 is disordered; it reads IRNTSSISPRGYSSSSTPQQSNYSTPSNSMNGYSNVPM. Residues 459 to 481 are compositionally biased toward low complexity; that stretch reads SSISPRGYSSSSTPQQSNYSTPS. Polar residues predominate over residues 482–492; that stretch reads NSMNGYSNVPM.

Belongs to the COE family. In embryos, expressed in precursors of primary neurons. In adults, expressed at high levels in the brain, and at low levels in the somatic muscles, testis, and possibly the spleen.

It localises to the nucleus. In terms of biological role, may play a pivotal role in the transcriptional cascade that specifies primary neurons in embryos. Stabilizes the higher neural potential of selected progenitor cells that express neurog2/X-ngnr-1 by maintaining Delta-Notch signaling. Thus ensures the transition between neural competence and irreversible commitment to a neural fate. Also promotes neuronal differentiation by activating neurod1 expression, directly or indirectly. In Xenopus laevis (African clawed frog), this protein is Transcription factor coe2-B.